The sequence spans 747 residues: Probable type III restriction-modification enzyme HindVI Mod subunit (747 aa).

The interval 267-270 (DPPY) is binding of S-adenosyl methionine.

This sequence belongs to the N(4)/N(6)-methyltransferase family. As to quaternary structure, homodimer, also forms a functional restriction-competent complex with Res.

It carries out the reaction a 2'-deoxyadenosine in DNA + S-adenosyl-L-methionine = an N(6)-methyl-2'-deoxyadenosine in DNA + S-adenosyl-L-homocysteine + H(+). In terms of biological role, a beta subtype methylase that binds the system-specific DNA recognition site 5'-CGAAT-3' and methylates A-4 (of only 1 strand). DNA restriction requires both the Res and Mod subunits. The chain is Probable type III restriction-modification enzyme HindVI Mod subunit from Haemophilus influenzae (strain ATCC 51907 / DSM 11121 / KW20 / Rd).